The following is a 595-amino-acid chain: Elongation factor 4 (595 aa).

Residues 2-183 form the tr-type G domain; it reads KNIRNFCIIA…TIVEKVPAPK (182 aa). Residues 14-19 and 130-133 each bind GTP; these read DHGKST and NKID.

It belongs to the TRAFAC class translation factor GTPase superfamily. Classic translation factor GTPase family. LepA subfamily.

The protein resides in the cell inner membrane. It carries out the reaction GTP + H2O = GDP + phosphate + H(+). In terms of biological role, required for accurate and efficient protein synthesis under certain stress conditions. May act as a fidelity factor of the translation reaction, by catalyzing a one-codon backward translocation of tRNAs on improperly translocated ribosomes. Back-translocation proceeds from a post-translocation (POST) complex to a pre-translocation (PRE) complex, thus giving elongation factor G a second chance to translocate the tRNAs correctly. Binds to ribosomes in a GTP-dependent manner. This chain is Elongation factor 4, found in Parabacteroides distasonis (strain ATCC 8503 / DSM 20701 / CIP 104284 / JCM 5825 / NCTC 11152).